The chain runs to 434 residues: Tryptophan synthase beta chain (434 aa).

The residue at position 92 (K92) is an N6-(pyridoxal phosphate)lysine. The interval 411–434 (VKGGVATSPESFDASGAKGAGSQS) is disordered.

It belongs to the TrpB family. Tetramer of two alpha and two beta chains. Pyridoxal 5'-phosphate is required as a cofactor.

It carries out the reaction (1S,2R)-1-C-(indol-3-yl)glycerol 3-phosphate + L-serine = D-glyceraldehyde 3-phosphate + L-tryptophan + H2O. It participates in amino-acid biosynthesis; L-tryptophan biosynthesis; L-tryptophan from chorismate: step 5/5. Functionally, the beta subunit is responsible for the synthesis of L-tryptophan from indole and L-serine. The sequence is that of Tryptophan synthase beta chain from Polaromonas naphthalenivorans (strain CJ2).